The sequence spans 275 residues: Cis-toluene dihydrodiol dehydrogenase (275 aa).

Position 9-33 (9-33 (LVTGGGAGLGRAIVDRYVAEGARVA)) interacts with NAD(+). A substrate-binding site is contributed by Ser-142. The active-site Proton acceptor is Tyr-155.

This sequence belongs to the short-chain dehydrogenases/reductases (SDR) family.

It carries out the reaction (1S,2R)-3-methylcyclohexa-3,5-diene-1,2-diol + NAD(+) = 3-methylcatechol + NADH + H(+). Its pathway is xenobiotic degradation; toluene degradation. The chain is Cis-toluene dihydrodiol dehydrogenase (todD) from Pseudomonas putida (strain ATCC 700007 / DSM 6899 / JCM 31910 / BCRC 17059 / LMG 24140 / F1).